A 232-amino-acid chain; its full sequence is Phosphatidylserine decarboxylase proenzyme (232 aa).

Ser-190 (schiff-base intermediate with substrate; via pyruvic acid) is an active-site residue. The residue at position 190 (Ser-190) is a Pyruvic acid (Ser); by autocatalysis.

It belongs to the phosphatidylserine decarboxylase family. PSD-A subfamily. As to quaternary structure, heterodimer of a large membrane-associated beta subunit and a small pyruvoyl-containing alpha subunit. Pyruvate serves as cofactor. Post-translationally, is synthesized initially as an inactive proenzyme. Formation of the active enzyme involves a self-maturation process in which the active site pyruvoyl group is generated from an internal serine residue via an autocatalytic post-translational modification. Two non-identical subunits are generated from the proenzyme in this reaction, and the pyruvate is formed at the N-terminus of the alpha chain, which is derived from the carboxyl end of the proenzyme. The post-translation cleavage follows an unusual pathway, termed non-hydrolytic serinolysis, in which the side chain hydroxyl group of the serine supplies its oxygen atom to form the C-terminus of the beta chain, while the remainder of the serine residue undergoes an oxidative deamination to produce ammonia and the pyruvoyl prosthetic group on the alpha chain.

It is found in the cell membrane. The catalysed reaction is a 1,2-diacyl-sn-glycero-3-phospho-L-serine + H(+) = a 1,2-diacyl-sn-glycero-3-phosphoethanolamine + CO2. It functions in the pathway phospholipid metabolism; phosphatidylethanolamine biosynthesis; phosphatidylethanolamine from CDP-diacylglycerol: step 2/2. In terms of biological role, catalyzes the formation of phosphatidylethanolamine (PtdEtn) from phosphatidylserine (PtdSer). This chain is Phosphatidylserine decarboxylase proenzyme, found in Rhodopseudomonas palustris (strain TIE-1).